The following is a 132-amino-acid chain: Interleukin-4 (132 aa).

A signal peptide spans 1 to 24 (MGLTSQLIPTLVCLLALTSTFVHG). 4 N-linked (GlcNAc...) asparagine glycosylation sites follow: N28, N45, N62, and N101. 2 disulfides stabilise this stretch: C48/C84 and C70/C104.

Belongs to the IL-4/IL-13 family.

It localises to the secreted. Participates in at least several B-cell activation processes as well as of other cell types. It is a costimulator of DNA-synthesis. It induces the expression of class II MHC molecules on resting B-cells. It enhances both secretion and cell surface expression of IgE and IgG1. It also regulates the expression of the low affinity Fc receptor for IgE (CD23) on both lymphocytes and monocytes. Positively regulates IL31RA expression in macrophages. Stimulates autophagy in dendritic cells by interfering with mTORC1 signaling and through the induction of RUFY4. In Ailuropoda melanoleuca (Giant panda), this protein is Interleukin-4 (IL4).